A 488-amino-acid polypeptide reads, in one-letter code: Probable apyrase 5 (488 aa).

A disordered region spans residues 1–26 (MDALKVQILPDNQSSPSSTHMLTKPK). Residues 1-32 (MDALKVQILPDNQSSPSSTHMLTKPKSKKATK) are Cytoplasmic-facing. Residues 10-21 (PDNQSSPSSTHM) are compositionally biased toward polar residues. A helical; Signal-anchor for type II membrane protein transmembrane segment spans residues 33–53 (SIAMLIVASLAITLGLLFVFS). At 54–488 (SNSVMFSASF…GKSRKMIGFK (435 aa)) the chain is on the extracellular side. Residue 73-83 (VIIDAGSSGTR) participates in ATP binding. Catalysis depends on E196, which acts as the Proton acceptor. 220 to 230 (GIVELGGASAQ) provides a ligand contact to ATP. An N-linked (GlcNAc...) asparagine glycan is attached at N251.

This sequence belongs to the GDA1/CD39 NTPase family. The cofactor is Ca(2+). Highly expressed in young rosette leaves but only weakly in roots.

Its subcellular location is the membrane. It carries out the reaction a ribonucleoside 5'-triphosphate + 2 H2O = a ribonucleoside 5'-phosphate + 2 phosphate + 2 H(+). Catalyzes the hydrolysis of phosphoanhydride bonds of nucleoside tri- and di-phosphates. The chain is Probable apyrase 5 (APY5) from Arabidopsis thaliana (Mouse-ear cress).